Consider the following 201-residue polypeptide: MILQVVLLLACLSGAIVSTGACCPPSRFNAFQYVTIVNSTTRTRGLYYMVYDGPNERYLLTGDRLKNLYGTTRVIYDYKKGIAYNIDVQKRSCTTFPLHGKFEDQENVCVPRDAVYTGRSAYGFDQGALHSWSYEYNRTHPDGRHQNIETTVTKENCIPIVTTTISTDASGGNSLHILGYNDFYPGIRDISMLEIPSYCRA.

A signal peptide spans 1-21 (MILQVVLLLACLSGAIVSTGA). 2 N-linked (GlcNAc...) asparagine glycosylation sites follow: N38 and N137. The Microbody targeting signal motif lies at 199–201 (CRA).

The protein belongs to the ependymin family. As to expression, component of the acid-soluble and acid-insoluble organic matrix of calcified shell layers (at protein level).

The protein resides in the secreted. The sequence is that of Ependymin-related protein 2 from Haliotis asinina (Donkey's ear abalone).